The primary structure comprises 729 residues: Kinesin-like protein KAR3 (729 aa).

The disordered stretch occupies residues 1 to 48 (MESLPRTPTKGRSTQHLSTPSPKNDILAMNGHKRRNTTTPPPKHTLLK). The interval 1–109 (MESLPRTPTK…ENVNELNRTQ (109 aa)) is globular. Residues 10–22 (KGRSTQHLSTPSP) show a composition bias toward polar residues. Positions 110-357 (AILFEKKATL…LEEYIKDTEL (248 aa)) form a coiled coil. Asn386, Arg388, Arg392, Glu454, Gly477, Ser478, Gly479, Lys480, Thr481, Phe482, Glu554, Lys579, and Thr694 together coordinate ATP. The 338-residue stretch at 386 to 723 (NIRVYCRIRP…LRFASKVNST (338 aa)) folds into the Kinesin motor domain.

The protein belongs to the TRAFAC class myosin-kinesin ATPase superfamily. Kinesin family. NCD subfamily. Interacts with CIK1; the interaction is direct. Interacts with VIK1; the interaction is direct.

It is found in the cytoplasm. The protein resides in the cytoskeleton. The protein localises to the microtubule organizing center. It localises to the spindle pole body. Its subcellular location is the nucleus. It is found in the chromosome. The protein resides in the spindle. It catalyses the reaction ATP + H2O = ADP + phosphate + H(+). The enzyme catalyses ATP + H2O + a kinesin associated with a microtubule at position (n) = ADP + phosphate + a kinesin associated with a microtubule at position (n-1, toward the minus end).. Its function is as follows. Minus end-directed microtubule (MT) motor involved in spindle midzone assembly, poleward transport of newly captured kinetochores along the lateral side of MTs, karyogamy (nuclear fusion) during mating, and with an essential function in meiosis I. Functions together with the accessory proteins CIK1 or VIK1. Drives the poleward transport of newly captured kinetochores along the lateral side of MTs, both during S-phase and during M-phase. To contribute to spindle midzone assembly during mitotic metaphase, the nuclear KAR3-CIK1 motor cross-links anti-parallel microtubules to align them on the spindle axis; as the motor travels polewards splayed microtubules are pulled into alignment. During the karyogamy (nuclear fusion) step of mating, KAR3-CIK1 cross-links antiparallel cytoplasmic microtubules emanating from the spindle pole bodies of mating partners; the motor activity of KAR3 creates the force that pulls the nuclei together by sliding cross-linked microtubules past one another. KAR3-CIK1 promotes microtubule shortening predominantly from the microtubule plus-end. Together with cytoplasmic VIK1, may act to stabilize microtubules. Requires accessory protein VIK1 for spindle pole body localization and to allow the CIN8 and KIP1 motors to generate outwardly directed spindle forces. Essential during meiosis I. The ATPase activity is stimulated by microtubule-binding. This Saccharomyces cerevisiae (strain ATCC 204508 / S288c) (Baker's yeast) protein is Kinesin-like protein KAR3 (KAR3).